Consider the following 97-residue polypeptide: uncharacterized protein (97 aa).

Ser-2 is modified (N-acetylserine).

This is an uncharacterized protein from Mycobacterium tuberculosis (strain ATCC 25618 / H37Rv).